Here is a 165-residue protein sequence, read N- to C-terminus: Xanthine-guanine phosphoribosyltransferase (165 aa).

Residues 41–42 (RG) and 98–106 (DDLTDTGKT) contribute to the 5-phospho-alpha-D-ribose 1-diphosphate site. Aspartate 99 provides a ligand contact to Mg(2+). Guanine contacts are provided by aspartate 102 and isoleucine 145. 2 residues coordinate xanthine: aspartate 102 and isoleucine 145. GMP contacts are provided by residues 102–106 (DTGKT) and 144–145 (WI).

Belongs to the purine/pyrimidine phosphoribosyltransferase family. XGPT subfamily. As to quaternary structure, homotetramer. It depends on Mg(2+) as a cofactor.

The protein resides in the cell inner membrane. It catalyses the reaction GMP + diphosphate = guanine + 5-phospho-alpha-D-ribose 1-diphosphate. The catalysed reaction is XMP + diphosphate = xanthine + 5-phospho-alpha-D-ribose 1-diphosphate. It carries out the reaction IMP + diphosphate = hypoxanthine + 5-phospho-alpha-D-ribose 1-diphosphate. The protein operates within purine metabolism; GMP biosynthesis via salvage pathway; GMP from guanine: step 1/1. Its pathway is purine metabolism; XMP biosynthesis via salvage pathway; XMP from xanthine: step 1/1. Purine salvage pathway enzyme that catalyzes the transfer of the ribosyl-5-phosphate group from 5-phospho-alpha-D-ribose 1-diphosphate (PRPP) to the N9 position of the 6-oxopurines guanine and xanthine to form the corresponding ribonucleotides GMP (guanosine 5'-monophosphate) and XMP (xanthosine 5'-monophosphate), with the release of PPi. To a lesser extent, also acts on hypoxanthine. This Rhizobium meliloti (strain 1021) (Ensifer meliloti) protein is Xanthine-guanine phosphoribosyltransferase.